The following is a 334-amino-acid chain: MLNTLIVGASGYAGAELVTYVNRHPHMNITALTVSAQSNDAGKLISDLHPQLKGIVDLPLQPMSDISEFSPGVDVVFLATAHEVSHDLAPQFLEAGCVVFDLSGAFRVNDVAFYEKYYGFTHQYPELLEQAAYGLAEWCGNKLKEANLIAVPGCYPTAAQLALKPLIDADLLDLNQWPVINATSGVSGAGRKAAISNSFCEVSLQPYGVFTHRHQPEIATHLGADVIFTPHLGNFPRGILETITCRLKPGVSQVQVAQALQQAYAHKPLVRLYDKGVPALKNVVGLPFCDIGFAVQGEHLIIVATEDNLLKGAAAQAVQCANIRFGYAETQSLI.

Residue cysteine 154 is part of the active site.

Belongs to the NAGSA dehydrogenase family. Type 1 subfamily.

It localises to the cytoplasm. The enzyme catalyses N-acetyl-L-glutamate 5-semialdehyde + phosphate + NADP(+) = N-acetyl-L-glutamyl 5-phosphate + NADPH + H(+). Its pathway is amino-acid biosynthesis; L-arginine biosynthesis; N(2)-acetyl-L-ornithine from L-glutamate: step 3/4. Catalyzes the NADPH-dependent reduction of N-acetyl-5-glutamyl phosphate to yield N-acetyl-L-glutamate 5-semialdehyde. This Escherichia coli O6:H1 (strain CFT073 / ATCC 700928 / UPEC) protein is N-acetyl-gamma-glutamyl-phosphate reductase.